A 418-amino-acid chain; its full sequence is Tryptophan synthase beta chain (418 aa).

Polar residues predominate over residues 1–17 (MTSTLPNASTPDPSSLQ). The segment at 1–23 (MTSTLPNASTPDPSSLQPAVRPG) is disordered. Position 111 is an N6-(pyridoxal phosphate)lysine (Lys111).

Belongs to the TrpB family. In terms of assembly, tetramer of two alpha and two beta chains. Pyridoxal 5'-phosphate is required as a cofactor.

The enzyme catalyses (1S,2R)-1-C-(indol-3-yl)glycerol 3-phosphate + L-serine = D-glyceraldehyde 3-phosphate + L-tryptophan + H2O. It participates in amino-acid biosynthesis; L-tryptophan biosynthesis; L-tryptophan from chorismate: step 5/5. The beta subunit is responsible for the synthesis of L-tryptophan from indole and L-serine. The sequence is that of Tryptophan synthase beta chain from Synechococcus sp. (strain CC9605).